The primary structure comprises 129 residues: Fluoride-specific ion channel FluC (129 aa).

4 helical membrane-spanning segments follow: residues 10-30 (LLVGAGGFLGTVARYLVALAF), 35-55 (PGFPFATFSVNIAGSFLIGFL), 71-91 (LFLVTGFCGGFTTFSSYMFEG), and 105-125 (LYLAGSIVGGFVALYTGIIAA). Residues G79 and T82 each contribute to the Na(+) site.

The protein belongs to the fluoride channel Fluc/FEX (TC 1.A.43) family.

Its subcellular location is the cell inner membrane. It carries out the reaction fluoride(in) = fluoride(out). With respect to regulation, na(+) is not transported, but it plays an essential structural role and its presence is essential for fluoride channel function. Fluoride-specific ion channel. Important for reducing fluoride concentration in the cell, thus reducing its toxicity. This Chlorobium luteolum (strain DSM 273 / BCRC 81028 / 2530) (Pelodictyon luteolum) protein is Fluoride-specific ion channel FluC.